The following is a 205-amino-acid chain: GTP cyclohydrolase-2 (205 aa).

49-53 (RVHSE) provides a ligand contact to GTP. The Zn(2+) site is built by cysteine 54, cysteine 65, and cysteine 67. Residues glutamine 70, 92–94 (EGR), and threonine 114 contribute to the GTP site. Residue aspartate 126 is the Proton acceptor of the active site. The Nucleophile role is filled by arginine 128. 2 residues coordinate GTP: threonine 149 and lysine 154.

This sequence belongs to the GTP cyclohydrolase II family. Zn(2+) is required as a cofactor.

The catalysed reaction is GTP + 4 H2O = 2,5-diamino-6-hydroxy-4-(5-phosphoribosylamino)-pyrimidine + formate + 2 phosphate + 3 H(+). Its pathway is cofactor biosynthesis; riboflavin biosynthesis; 5-amino-6-(D-ribitylamino)uracil from GTP: step 1/4. In terms of biological role, catalyzes the conversion of GTP to 2,5-diamino-6-ribosylamino-4(3H)-pyrimidinone 5'-phosphate (DARP), formate and pyrophosphate. This chain is GTP cyclohydrolase-2, found in Pseudomonas fluorescens (strain SBW25).